We begin with the raw amino-acid sequence, 58 residues long: ATP synthase F(0) complex subunit k, mitochondrial (58 aa).

N6-acetyllysine occurs at positions 16 and 17. A helical transmembrane segment spans residues 23–45; it reads TLTGRMNCVLATYGGIALLVLYF.

As to quaternary structure, component of the ATP synthase complex composed at least of ATP5F1A/subunit alpha, ATP5F1B/subunit beta, ATP5MC1/subunit c (homooctomer), MT-ATP6/subunit a, MT-ATP8/subunit 8, ATP5ME/subunit e, ATP5MF/subunit f, ATP5MG/subunit g, ATP5MK/subunit k, ATP5MJ/subunit j, ATP5F1C/subunit gamma, ATP5F1D/subunit delta, ATP5F1E/subunit epsilon, ATP5PF/subunit F6, ATP5PB/subunit b, ATP5PD/subunit d, ATP5PO/subunit OSCP. ATP synthase complex consists of a soluble F(1) head domain (subunits alpha(3) and beta(3)) - the catalytic core - and a membrane F(0) domain - the membrane proton channel (subunits c, a, 8, e, f, g, k and j). These two domains are linked by a central stalk (subunits gamma, delta, and epsilon) rotating inside the F1 region and a stationary peripheral stalk (subunits F6, b, d, and OSCP). The ATP synthase complex/complex V exists as a monomeric and a dimeric supercomplex that helps shape mitochondrial cristae to optimize proton flow.

It localises to the mitochondrion membrane. Functionally, subunit k, of the mitochondrial membrane ATP synthase complex (F(1)F(0) ATP synthase or Complex V) that produces ATP from ADP in the presence of a proton gradient across the membrane which is generated by electron transport complexes of the respiratory chain. ATP synthase complex consist of a soluble F(1) head domain - the catalytic core - and a membrane F(1) domain - the membrane proton channel. These two domains are linked by a central stalk rotating inside the F(1) region and a stationary peripheral stalk. During catalysis, ATP synthesis in the catalytic domain of F(1) is coupled via a rotary mechanism of the central stalk subunits to proton translocation. In vivo, can only synthesize ATP although its ATP hydrolase activity can be activated artificially in vitro. Part of the complex F(0) domain. Required for dimerization of the ATP synthase complex and as such regulates ATP synthesis in the mitochondria. The polypeptide is ATP synthase F(0) complex subunit k, mitochondrial (Mus musculus (Mouse)).